Consider the following 96-residue polypeptide: Small ribosomal subunit protein bS6 (96 aa).

This sequence belongs to the bacterial ribosomal protein bS6 family.

Binds together with bS18 to 16S ribosomal RNA. In Gloeobacter violaceus (strain ATCC 29082 / PCC 7421), this protein is Small ribosomal subunit protein bS6.